We begin with the raw amino-acid sequence, 520 residues long: FNIP repeat-containing protein DDB_G0274063/DDB_G0272642 (520 aa).

2 disordered regions span residues glutamine 47–arginine 86 and asparagine 100–serine 121. Low complexity predominate over residues asparagine 51 to aspartate 84. FNIP repeat units follow at residues tyrosine 242–serine 285, phenylalanine 286–serine 331, tyrosine 332–glutamine 406, and phenylalanine 453–serine 496.

This chain is FNIP repeat-containing protein DDB_G0274063/DDB_G0272642, found in Dictyostelium discoideum (Social amoeba).